Consider the following 834-residue polypeptide: Copper-exporting P-type ATPase (834 aa).

Residues 2–186 (SQTIDLTLDG…TAVATMKRFR (185 aa)) are Cytoplasmic-facing. 2 HMA domains span residues 3–64 (QTID…YDAS) and 99–162 (DSQQ…YGAE). Cu(+)-binding residues include C14, C17, C110, and C113. Short sequence motifs (CXXC motif) lie at residues 14-17 (CGHC) and 110-113 (CASC). A helical membrane pass occupies residues 187–207 (WQAIVALAVGIPVMVWGMIGD). Over 208 to 217 (NMMVTADNRS) the chain is Periplasmic; loop 1. A helical transmembrane segment spans residues 218 to 238 (LWLVIGLITLAVMVFAGGHFY). The Cytoplasmic portion of the chain corresponds to 239-253 (RSAWKSLLNGAATMD). A helical membrane pass occupies residues 254-274 (TLVALGTGVAWLYSMSVNLWP). Residues 275-283 (QWFPMEARH) lie on the Periplasmic; loop 2 side of the membrane. The chain crosses the membrane as a helical span at residues 284–304 (LYYEASAMIIGLINLGHMLEA). Over 305–437 (RARQRSSKAL…EIGQLADKIS (133 aa)) the chain is Cytoplasmic. The helical transmembrane segment at 438 to 458 (AVFVPVVVVIALVSAAIWYFF) threads the bilayer. The Periplasmic; loop 3 segment spans residues 459 to 463 (GPAPQ). A helical membrane pass occupies residues 464–484 (IVYTLVIATTVLIIACPCALG). Residues 485-778 (LATPMSIISG…ATLHNMKQNL (294 aa)) are Cytoplasmic-facing. The 4-aspartylphosphate intermediate role is filled by D523. Mg(2+)-binding residues include D720 and D724. Residues 779 to 799 (LGAFIYNSIGIPVAAGILWPF) form a helical membrane-spanning segment. T800 is a topological domain (periplasmic; loop 4). A helical membrane pass occupies residues 801-821 (GTLLNPVVAGAAMALSSITVV). Over 822–834 (SNANRLLRFKPKE) the chain is Cytoplasmic.

The protein belongs to the cation transport ATPase (P-type) (TC 3.A.3) family. Type IB subfamily. In terms of assembly, copper-exporting P-type ATPase interacts with apo-periplasmic copper chaperone CusF; when CusF is precharged with copper it binds very little CopA. The periplasmic loops of CopA, especially the first half of loop 1, play a large role in binding to CusF.

The protein resides in the cell inner membrane. The protein localises to the cytoplasm. It carries out the reaction Cu(+)(in) + ATP + H2O = Cu(+)(out) + ADP + phosphate + H(+). Its activity is regulated as follows. Export is inhibited by vanadate. Phosphorylation is inhibited by vanadate and sensitive to KOH and hydroxylamine; it is not inhibited by azide. Phosphorylation is Cu(+) not Cu(2+)-dependent. ATPase activity is inhibited by bathocuproindisulfonate (BCDS), which chelates Cu(+) but not Cu(2+), and stimulated 3-4-fold by Cu(+). ATPase activity is inhibited by Cu(2+) plus DTT or Ag(+). Its function is as follows. Exports Cu(+) from the cytoplasm to the periplasm. Binds 2 Cu(+) ions per monomer, which are transferred to periplasmic copper chaperone CusF upon ATP hydrolysis. In vitro an excess of CusF over CopA is required for efficient transfer. May also be involved in silver export. Functionally, mRNA is subject to programmed ribosomal frameshifting which produces a cytoplasmic copper chaperone CopA(Z) that corresponds to the first HMA domain. The soluble form is essential for cell survivial in the presence of CuSO(4); in growth competition experiments between wild-type and a version that prevents expression of CopA(Z) after 50 generations the non-CopA(Z) version is nearly extinct. The first HMA domain (residues 1-70) can be replaced by B.subtilis Cu chaperone CopZ. The sequence is that of Copper-exporting P-type ATPase from Escherichia coli (strain K12).